Reading from the N-terminus, the 273-residue chain is CUE domain-containing protein 2-A (273 aa).

Positions 92–121 (GKENVSPKPTAEVSFMTPTSSSTESSKKIE) are disordered. The region spanning 135–178 (DAKNGIDLLLEIFPSCTVSQAQTALSMAKGDLEDAVQIIVDGKV) is the CUE domain.

Belongs to the CUEDC2 family. Phosphorylated.

It localises to the cytoplasm. Its subcellular location is the nucleus. May play a role in targeting proteins for ubiquitination and subsequent proteasomal degradation. The polypeptide is CUE domain-containing protein 2-A (cuedc2-a) (Xenopus laevis (African clawed frog)).